The primary structure comprises 329 residues: DNA-directed RNA polymerase subunit alpha (329 aa).

Residues 1–231 (MQTTLLKPKT…EQLAVFAQLE (231 aa)) form an alpha N-terminal domain (alpha-NTD) region. The tract at residues 249-329 (FDPILLRPVD…SWPPAGLDKR (81 aa)) is alpha C-terminal domain (alpha-CTD).

It belongs to the RNA polymerase alpha chain family. In terms of assembly, homodimer. The RNAP catalytic core consists of 2 alpha, 1 beta, 1 beta' and 1 omega subunit. When a sigma factor is associated with the core the holoenzyme is formed, which can initiate transcription.

The catalysed reaction is RNA(n) + a ribonucleoside 5'-triphosphate = RNA(n+1) + diphosphate. In terms of biological role, DNA-dependent RNA polymerase catalyzes the transcription of DNA into RNA using the four ribonucleoside triphosphates as substrates. In Variovorax paradoxus (strain S110), this protein is DNA-directed RNA polymerase subunit alpha.